Here is a 95-residue protein sequence, read N- to C-terminus: MKISKQDVEHLAHLARLAVDGSQVESLTAQVSNILDYMDVLKEVDVDGVPLASGAALGTNVFRQDQVKPSPGPCVTLANAPERDDDFYTVPRIVG.

Belongs to the GatC family. In terms of assembly, heterotrimer of A, B and C subunits.

The catalysed reaction is L-glutamyl-tRNA(Gln) + L-glutamine + ATP + H2O = L-glutaminyl-tRNA(Gln) + L-glutamate + ADP + phosphate + H(+). It carries out the reaction L-aspartyl-tRNA(Asn) + L-glutamine + ATP + H2O = L-asparaginyl-tRNA(Asn) + L-glutamate + ADP + phosphate + 2 H(+). In terms of biological role, allows the formation of correctly charged Asn-tRNA(Asn) or Gln-tRNA(Gln) through the transamidation of misacylated Asp-tRNA(Asn) or Glu-tRNA(Gln) in organisms which lack either or both of asparaginyl-tRNA or glutaminyl-tRNA synthetases. The reaction takes place in the presence of glutamine and ATP through an activated phospho-Asp-tRNA(Asn) or phospho-Glu-tRNA(Gln). This chain is Aspartyl/glutamyl-tRNA(Asn/Gln) amidotransferase subunit C, found in Desulforapulum autotrophicum (strain ATCC 43914 / DSM 3382 / VKM B-1955 / HRM2) (Desulfobacterium autotrophicum).